The primary structure comprises 468 residues: Na(+)/H(+) antiporter NhaA (468 aa).

The next 12 membrane-spanning stretches (helical) occupy residues 28-48, 79-99, 115-135, 143-163, 173-193, 196-216, 219-239, 240-260, 317-337, 356-376, 392-412, and 426-446; these read FLHVEAVSGAVLLAAAAIALV, LHFWINDALMTLFFLAVGMEI, ALPLAAALGGVVAPALIYLAF, AGWAVPTATDIAFAVGVLALL, IFLLALAIIDDIIAVLIIAFF, GGLDYSGFAVAALGIAIVLGL, IGIGTAYAYVLPGAIVWTGLL, MTGAHPTLAGVVLGLMTPVVP, ALHPWVAYAIMPLFALANAGV, VAGALIVGKPAGVIAMSWLLV, IVLIGLLAGVGFTMSIFIAML, and LGVLLGSLATAMLGLAWGAIY.

The protein belongs to the NhaA Na(+)/H(+) (TC 2.A.33) antiporter family.

The protein localises to the cell inner membrane. It catalyses the reaction Na(+)(in) + 2 H(+)(out) = Na(+)(out) + 2 H(+)(in). Its function is as follows. Na(+)/H(+) antiporter that extrudes sodium in exchange for external protons. In Bordetella petrii (strain ATCC BAA-461 / DSM 12804 / CCUG 43448), this protein is Na(+)/H(+) antiporter NhaA.